Here is a 347-residue protein sequence, read N- to C-terminus: UDP-N-acetylglucosamine--N-acetylmuramyl-(pentapeptide) pyrophosphoryl-undecaprenol N-acetylglucosamine transferase (347 aa).

UDP-N-acetyl-alpha-D-glucosamine is bound by residues 11 to 13 (TGG), N122, R163, S189, and Q279.

It belongs to the glycosyltransferase 28 family. MurG subfamily.

It localises to the cell inner membrane. It carries out the reaction di-trans,octa-cis-undecaprenyl diphospho-N-acetyl-alpha-D-muramoyl-L-alanyl-D-glutamyl-meso-2,6-diaminopimeloyl-D-alanyl-D-alanine + UDP-N-acetyl-alpha-D-glucosamine = di-trans,octa-cis-undecaprenyl diphospho-[N-acetyl-alpha-D-glucosaminyl-(1-&gt;4)]-N-acetyl-alpha-D-muramoyl-L-alanyl-D-glutamyl-meso-2,6-diaminopimeloyl-D-alanyl-D-alanine + UDP + H(+). Its pathway is cell wall biogenesis; peptidoglycan biosynthesis. In terms of biological role, cell wall formation. Catalyzes the transfer of a GlcNAc subunit on undecaprenyl-pyrophosphoryl-MurNAc-pentapeptide (lipid intermediate I) to form undecaprenyl-pyrophosphoryl-MurNAc-(pentapeptide)GlcNAc (lipid intermediate II). The polypeptide is UDP-N-acetylglucosamine--N-acetylmuramyl-(pentapeptide) pyrophosphoryl-undecaprenol N-acetylglucosamine transferase (Sulfurihydrogenibium sp. (strain YO3AOP1)).